A 119-amino-acid polypeptide reads, in one-letter code: Chorion class CA protein ERA.3 (119 aa).

The first 21 residues, 1–21 (MSYFVVFAICIQACLFHNVYS), serve as a signal peptide directing secretion. Residues 22 to 55 (QCLGRVGPGGPPLGPYGGPLGGPGYGPVGYGGCG) form a left arm region. Residues 56 to 103 (GYGGSGIGNVAVAGELPVVGSSAVMGQVPVIGAVEFAGPACAVGSVSI) form a central domain region. The segment at 104 to 119 (SGACGPTCGCGGLPYY) is right arm.

This sequence belongs to the chorion protein family.

Its function is as follows. This protein is one of many from the eggshell of the silk moth. The chain is Chorion class CA protein ERA.3 (ERA.3) from Bombyx mori (Silk moth).